Consider the following 273-residue polypeptide: Phosphate import ATP-binding protein PstB (273 aa).

The 242-residue stretch at 27–268 (VTVRDLNFYY…PSDRRTQDYI (242 aa)) folds into the ABC transporter domain. 59 to 66 (GPSGCGKS) contributes to the ATP binding site.

This sequence belongs to the ABC transporter superfamily. Phosphate importer (TC 3.A.1.7) family. The complex is composed of two ATP-binding proteins (PstB), two transmembrane proteins (PstC and PstA) and a solute-binding protein (PstS).

The protein resides in the cell inner membrane. The enzyme catalyses phosphate(out) + ATP + H2O = ADP + 2 phosphate(in) + H(+). In terms of biological role, part of the ABC transporter complex PstSACB involved in phosphate import. Responsible for energy coupling to the transport system. This is Phosphate import ATP-binding protein PstB from Rhodopseudomonas palustris (strain ATCC BAA-98 / CGA009).